Reading from the N-terminus, the 266-residue chain is Gasdermin bGSDM (266 aa).

A run of 4 beta stranded transmembrane segments spans residues Phe-65–Leu-81, Glu-93–Glu-113, Gln-162–Val-181, and Ala-187–Thr-203. The interval Gly-248–Leu-266 is C-terminal region.

It belongs to the bacterial gasdermin family. As to quaternary structure, monomer. Forms large, homooligomeric ring-shaped pores when inserted in membranes.

Its subcellular location is the cytoplasm. It is found in the cell membrane. Its activity is regulated as follows. The full-length protein before cleavage is inactive: intramolecular interactions between the N-terminal domain and the C-terminal region mediate autoinhibition. The pyroptosis-like-inducing activity is carried by the released N-terminal domain (Gasdermin bGSDM, N-terminus). Its function is as follows. Precursor of a pore-forming protein involved in defense against bacteriophages. Cleavage of this precursor by its dedicated protease releases the active moiety (gasdermin bGSDM, N-terminus) which inserts into membranes, forming pores and triggering cell death. Expression of bGSDM and the neighboring protease gene (Ga0307981_100051430) is highly toxic in E.coli. Functionally, pore-forming protein that causes membrane permeabilization via a pyroptosis-like activity. This is the active form which makes ring-like pores with an interior pore diameter of 130-190 Angstroms, when integrated in liposomes. In Unknown prokaryotic organism, this protein is Gasdermin bGSDM.